Here is a 464-residue protein sequence, read N- to C-terminus: Siroheme synthase (464 aa).

The segment at 1 to 203 (MEFLPLFHNL…GQGDEAERLL (203 aa)) is precorrin-2 dehydrogenase /sirohydrochlorin ferrochelatase. NAD(+)-binding positions include 22–23 (EI) and 43–44 (PQ). A Phosphoserine modification is found at Ser128. Positions 216–464 (GEVYLVGAGP…KWFEGAQSQV (249 aa)) are uroporphyrinogen-III C-methyltransferase. S-adenosyl-L-methionine is bound at residue Pro225. Asp248 serves as the catalytic Proton acceptor. Catalysis depends on Lys270, which acts as the Proton donor. Residues 301-303 (GGD), Ile306, 331-332 (TA), Met383, and Gly412 each bind S-adenosyl-L-methionine.

The protein in the N-terminal section; belongs to the precorrin-2 dehydrogenase / sirohydrochlorin ferrochelatase family. It in the C-terminal section; belongs to the precorrin methyltransferase family.

It catalyses the reaction uroporphyrinogen III + 2 S-adenosyl-L-methionine = precorrin-2 + 2 S-adenosyl-L-homocysteine + H(+). The catalysed reaction is precorrin-2 + NAD(+) = sirohydrochlorin + NADH + 2 H(+). The enzyme catalyses siroheme + 2 H(+) = sirohydrochlorin + Fe(2+). It participates in cofactor biosynthesis; adenosylcobalamin biosynthesis; precorrin-2 from uroporphyrinogen III: step 1/1. The protein operates within cofactor biosynthesis; adenosylcobalamin biosynthesis; sirohydrochlorin from precorrin-2: step 1/1. Its pathway is porphyrin-containing compound metabolism; siroheme biosynthesis; precorrin-2 from uroporphyrinogen III: step 1/1. It functions in the pathway porphyrin-containing compound metabolism; siroheme biosynthesis; siroheme from sirohydrochlorin: step 1/1. It participates in porphyrin-containing compound metabolism; siroheme biosynthesis; sirohydrochlorin from precorrin-2: step 1/1. Its function is as follows. Multifunctional enzyme that catalyzes the SAM-dependent methylations of uroporphyrinogen III at position C-2 and C-7 to form precorrin-2 via precorrin-1. Then it catalyzes the NAD-dependent ring dehydrogenation of precorrin-2 to yield sirohydrochlorin. Finally, it catalyzes the ferrochelation of sirohydrochlorin to yield siroheme. The sequence is that of Siroheme synthase from Pseudomonas fluorescens (strain SBW25).